The sequence spans 219 residues: uncharacterized protein (219 aa).

The Cytoplasmic portion of the chain corresponds to 1 to 15 (MLKLTTTSVTFHVLR). A helical transmembrane segment spans residues 16–36 (YFQLGLSVTNLLLASFAIITN). At 37-41 (YKVDR) the chain is on the vacuolar side. Residues 42–62 (ILRLSLAVSIISSVYFGIVRF) form a helical membrane-spanning segment. Residue Leu63 is a topological domain, cytoplasmic. A helical transmembrane segment spans residues 64 to 84 (PVLLIFVMEIVQTVLWFTAFV). Residues 85-116 (TLASKFGSMSCSSMPRGINFDYSGSCKIAKID) lie on the Vacuolar side of the membrane. Residues 117-137 (ILPEAVLFILFLATTYASYIT) traverse the membrane as a helical segment. At 138-219 (VLSQAKENGS…VIDGSIEHSS (82 aa)) the chain is on the cytoplasmic side. The segment at 176-219 (PLLDLEVQEDARTETESIEDSTDSEDNANIEQEKVIDGSIEHSS) is disordered. The span at 191–203 (ESIEDSTDSEDNA) shows a compositional bias: acidic residues. The segment covering 206-219 (EQEKVIDGSIEHSS) has biased composition (basic and acidic residues).

It is found in the vacuole membrane. This is an uncharacterized protein from Saccharomyces cerevisiae (strain ATCC 204508 / S288c) (Baker's yeast).